Here is a 120-residue protein sequence, read N- to C-terminus: Large ribosomal subunit protein uL18 (120 aa).

This sequence belongs to the universal ribosomal protein uL18 family. Part of the 50S ribosomal subunit; part of the 5S rRNA/L5/L18/L25 subcomplex. Contacts the 5S and 23S rRNAs.

Functionally, this is one of the proteins that bind and probably mediate the attachment of the 5S RNA into the large ribosomal subunit, where it forms part of the central protuberance. This is Large ribosomal subunit protein uL18 from Rippkaea orientalis (strain PCC 8801 / RF-1) (Cyanothece sp. (strain PCC 8801)).